The chain runs to 280 residues: uncharacterized protein (280 aa).

3 helical membrane passes run 15 to 35 (IVDI…INRL), 68 to 88 (IGFI…ILAG), and 94 to 114 (IVIG…VFLI).

This sequence belongs to the MscS (TC 1.A.23) family.

The protein resides in the cell membrane. Its function is as follows. May play a role in resistance to osmotic downshock. This is an uncharacterized protein from Bacillus subtilis (strain 168).